The primary structure comprises 395 residues: Phosphopentomutase (395 aa).

The Mn(2+) site is built by aspartate 10, aspartate 294, histidine 299, aspartate 335, histidine 336, and histidine 347.

Belongs to the phosphopentomutase family. The cofactor is Mn(2+).

It localises to the cytoplasm. It carries out the reaction 2-deoxy-alpha-D-ribose 1-phosphate = 2-deoxy-D-ribose 5-phosphate. It catalyses the reaction alpha-D-ribose 1-phosphate = D-ribose 5-phosphate. It functions in the pathway carbohydrate degradation; 2-deoxy-D-ribose 1-phosphate degradation; D-glyceraldehyde 3-phosphate and acetaldehyde from 2-deoxy-alpha-D-ribose 1-phosphate: step 1/2. Its function is as follows. Isomerase that catalyzes the conversion of deoxy-ribose 1-phosphate (dRib-1-P) and ribose 1-phosphate (Rib-1-P) to deoxy-ribose 5-phosphate (dRib-5-P) and ribose 5-phosphate (Rib-5-P), respectively. The protein is Phosphopentomutase of Actinobacillus succinogenes (strain ATCC 55618 / DSM 22257 / CCUG 43843 / 130Z).